The following is an 801-amino-acid chain: Lon protease 2 (801 aa).

Residues 14–209 enclose the Lon N-terminal domain; sequence LPMLPVRDIV…LVNEILAAEL (196 aa). 361-368 provides a ligand contact to ATP; it reads GPPGVGKT. The Lon proteolytic domain occupies 597 to 778; the sequence is DSQVGVVQGL…DEVFAVAFDK (182 aa). Active-site residues include Ser684 and Lys727. The segment covering 780–791 has biased composition (basic and acidic residues); that stretch reads AKGQEKKPAAKK. The disordered stretch occupies residues 780 to 801; the sequence is AKGQEKKPAAKKDPKKTKSLAA. Over residues 792–801 the composition is skewed to basic residues; it reads DPKKTKSLAA.

It belongs to the peptidase S16 family. As to quaternary structure, homohexamer. Organized in a ring with a central cavity.

Its subcellular location is the cytoplasm. It catalyses the reaction Hydrolysis of proteins in presence of ATP.. Its function is as follows. ATP-dependent serine protease that mediates the selective degradation of mutant and abnormal proteins as well as certain short-lived regulatory proteins. Required for cellular homeostasis and for survival from DNA damage and developmental changes induced by stress. Degrades polypeptides processively to yield small peptide fragments that are 5 to 10 amino acids long. Binds to DNA in a double-stranded, site-specific manner. This chain is Lon protease 2, found in Bdellovibrio bacteriovorus (strain ATCC 15356 / DSM 50701 / NCIMB 9529 / HD100).